The primary structure comprises 361 residues: [LysW]-lysine hydrolase (361 aa).

Histidine 67 serves as a coordination point for Zn(2+). Aspartate 69 is a catalytic residue. Residue aspartate 91 coordinates Zn(2+). The active-site Proton acceptor is the glutamate 124. Zn(2+) is bound by residues glutamate 125, glutamate 148, and histidine 326.

The protein belongs to the peptidase M20A family. LysK subfamily. In terms of assembly, homotetramer and homooctamer. Zn(2+) serves as cofactor. It depends on Co(2+) as a cofactor.

The protein resides in the cytoplasm. The catalysed reaction is [amino-group carrier protein]-C-terminal-gamma-(L-lysyl)-L-glutamate + H2O = [amino-group carrier protein]-C-terminal-L-glutamate + L-lysine. Its pathway is amino-acid biosynthesis; L-lysine biosynthesis via AAA pathway; L-lysine from L-alpha-aminoadipate (Thermus route): step 5/5. In terms of biological role, catalyzes the release of L-lysine from [LysW]-gamma-L-lysine. In vitro, can deacetylate both N(2)-acetyl-L-lysine and N(2)-acetyl-L-ornithine. This chain is [LysW]-lysine hydrolase, found in Thermus thermophilus (strain ATCC BAA-163 / DSM 7039 / HB27).